Here is a 66-residue protein sequence, read N- to C-terminus: DNA-directed RNA polymerase subunit Rpo10 (66 aa).

4 residues coordinate Zn(2+): Cys-7, Cys-10, Cys-44, and Cys-45.

This sequence belongs to the archaeal Rpo10/eukaryotic RPB10 RNA polymerase subunit family. In terms of assembly, part of the RNA polymerase complex. It depends on Zn(2+) as a cofactor.

It localises to the cytoplasm. It catalyses the reaction RNA(n) + a ribonucleoside 5'-triphosphate = RNA(n+1) + diphosphate. In terms of biological role, DNA-dependent RNA polymerase (RNAP) catalyzes the transcription of DNA into RNA using the four ribonucleoside triphosphates as substrates. This chain is DNA-directed RNA polymerase subunit Rpo10, found in Pyrobaculum aerophilum (strain ATCC 51768 / DSM 7523 / JCM 9630 / CIP 104966 / NBRC 100827 / IM2).